The sequence spans 89 residues: Putative ankyrin repeat protein RF_1157 (89 aa).

The ANK repeat unit spans residues 2 to 32 (YNTTPLNFAINQENNEEVIKYLLANGANPRL).

In Rickettsia felis (strain ATCC VR-1525 / URRWXCal2) (Rickettsia azadi), this protein is Putative ankyrin repeat protein RF_1157.